A 145-amino-acid chain; its full sequence is RNAP inhibitory protein (145 aa).

The interval 110 to 123 is C-terminal tail, binds in the RNAP DNA-binding channel; sequence HIKKLNLNSLAMLS.

The protein belongs to the viral ORF131/RIP family. In terms of assembly, interacts with host RNA polymerase (RNAP) subunits Rpo1N and Rpo2.

It localises to the virion. In terms of biological role, plays a role in the inhibition of global transcription by interacting with the RNA polymerase (RNAP) clamp, locking it in a fixed position and inhibiting the formation and/or stability of the pre-initiation complex (PIC). Also overlaps with the transcription factor B binding site; overall RIP probably interferes with DNA loading onto RNAP but does not displace DNA once it is loaded. May play a role in virus particle assembly, possibly by dissociating active RNAP from the virus genome. This chain is RNAP inhibitory protein, found in Acidianus two-tailed virus (ATV).